The primary structure comprises 1513 residues: Exo-beta-1,6-galactobiohydrolase (1513 aa).

Residues 1 to 31 (MRVLSKSLAAMVAAATLVGGGAFAVAGTAYA) form the signal peptide. In terms of domain architecture, Ricin B-type lectin spans 666-801 (VADTTSGDSA…PSANQTWTLR (136 aa)). F5/8 type C domains are found at residues 965–1112 (AIYV…AFVT) and 1116–1273 (GAAK…VFAQ). The interval 1456–1480 (VAPGPEEQKPGNTNKPGATGNGNKN) is disordered. Over residues 1465–1480 (PGNTNKPGATGNGNKN) the composition is skewed to polar residues. The chain crosses the membrane as a helical span at residues 1489 to 1509 (VAAIAGAVALLAAAAGALFML).

Belongs to the glycosyl hydrolase 30 family.

Its subcellular location is the cell membrane. The enzyme catalyses Hydrolysis of (1-&gt;6)-beta-D-galactosidic linkages in arabinogalactan proteins and (1-&gt;3):(1-&gt;6)-beta-galactans to yield (1-&gt;6)-beta-galactobiose as the final product.. Functionally, involved in the type II arabinogalactan (AG) side chains degradation. Specifically releases the non-reducing terminal beta-1,6-galactobiose (beta-1,6-Gal2) from both dearabinosylated larch AG and polymeric beta-1,6-galactan chains by an exo-mode of action. Shows lower activity with larch AG, and very weak activity with dearabinosylated gum arabic, gum arabic and potato galactan. Can probably release beta-1,6-Gal2 from the internal side chains of type II AG. The protein is Exo-beta-1,6-galactobiohydrolase of Bifidobacterium longum subsp. longum (strain ATCC 15707 / DSM 20219 / JCM 1217 / NCTC 11818 / E194b).